Reading from the N-terminus, the 272-residue chain is Activator of basal transcription 1 (272 aa).

The residue at position 1 (Met-1) is an N-acetylmethionine. Residues 1–17 (MEAEESEKAATEQEPLK) show a composition bias toward basic and acidic residues. The disordered stretch occupies residues 1–38 (MEAEESEKAATEQEPLKGTEQTLDAEEEQEESEDAACG). A compositionally biased stretch (acidic residues) spans 23–34 (LDAEEEQEESED). Residues 46–142 (GIVYLGHIPP…RRRSPFRYDL (97 aa)) form the RRM domain. A coiled-coil region spans residues 161-191 (AFERQVRRQRLRAEVAQAKRETDFYLQSVER). Residues 197 to 272 (AADGDPARPD…MEGPSLVRDS (76 aa)) are disordered.

Belongs to the ESF2/ABP1 family. In terms of assembly, interacts with ESF1/ABTAP. Interacts with IGHMBP2.

It localises to the nucleus. The protein resides in the nucleolus. Could be a novel TATA-binding protein (TBP) which can function as a basal transcription activator. Can act as a regulator of basal transcription for class II genes. The polypeptide is Activator of basal transcription 1 (ABT1) (Pongo abelii (Sumatran orangutan)).